The chain runs to 198 residues: Endothelin-3 (198 aa).

The first 16 residues, 1–16 (MEPGLWLLFGLTVTSA), serve as a signal peptide directing secretion. The propeptide occupies 17-86 (AGLVPCPQPG…SKGGPVHGRA (70 aa)). The disordered stretch occupies residues 22–79 (CPQPGDAGKSGVPGTPPTARSEGDIQEPVAMTAVQGPSPRSPEQEQELGRFGEQASKG). 2 disulfide bridges follow: Cys-89-Cys-103 and Cys-91-Cys-99. Positions 110 to 198 (INTPEQTVPY…RGNGGLRPTR (89 aa)) are excised as a propeptide. An endothelin-like region spans residues 150–164 (CACVQSQDSACLHFC). The tract at residues 174–198 (SRTATNPDKEEEPASRGNGGLRPTR) is disordered.

Belongs to the endothelin/sarafotoxin family. In terms of tissue distribution, expressed in which included heart, lung, liver, kidney, spleen, stomach, pancreas, duodenum, colon, uterus, ovary and testis.

The protein resides in the secreted. Functionally, endothelins are endothelium-derived vasoconstrictor peptides. The polypeptide is Endothelin-3 (EDN3) (Canis lupus familiaris (Dog)).